The primary structure comprises 38 residues: Large ribosomal subunit protein bL36 (38 aa).

This sequence belongs to the bacterial ribosomal protein bL36 family.

This chain is Large ribosomal subunit protein bL36, found in Stutzerimonas stutzeri (strain A1501) (Pseudomonas stutzeri).